The following is a 733-amino-acid chain: uncharacterized protein (733 aa).

A helical membrane pass occupies residues 174–194; sequence WAVMILASLRPELFGPIIIAG.

Its subcellular location is the membrane. This is an uncharacterized protein from Rhizobium meliloti (Ensifer meliloti).